The primary structure comprises 936 residues: Aconitate hydratase A (936 aa).

The segment at valine 401–threonine 449 is disordered. A compositionally biased stretch (polar residues) spans threonine 412–threonine 422. The [4Fe-4S] cluster site is built by cysteine 472, cysteine 538, and cysteine 541.

This sequence belongs to the aconitase/IPM isomerase family. As to quaternary structure, monomer. Requires [4Fe-4S] cluster as cofactor.

It carries out the reaction citrate = D-threo-isocitrate. The enzyme catalyses (2S,3R)-3-hydroxybutane-1,2,3-tricarboxylate = 2-methyl-cis-aconitate + H2O. The protein operates within carbohydrate metabolism; tricarboxylic acid cycle; isocitrate from oxaloacetate: step 2/2. It participates in organic acid metabolism; propanoate degradation. Its function is as follows. Involved in the catabolism of short chain fatty acids (SCFA) via the tricarboxylic acid (TCA)(acetyl degradation route) and probably via the 2-methylcitrate cycle I (propionate degradation route). Catalyzes the reversible isomerization of citrate to isocitrate via cis-aconitate. Could catalyze the hydration of 2-methyl-cis-aconitate to yield (2R,3S)-2-methylisocitrate. The apo form of AcnA functions as a RNA-binding regulatory protein. The polypeptide is Aconitate hydratase A (acn) (Corynebacterium jeikeium (strain K411)).